The chain runs to 243 residues: Isoprenyl transferase 2 (243 aa).

Asp-23 is an active-site residue. A Mg(2+)-binding site is contributed by Asp-23. Residues 24–27, Trp-28, Arg-36, His-40, and 68–70 each bind substrate; these read GNGR and STE. Asn-71 functions as the Proton acceptor in the catalytic mechanism. Substrate contacts are provided by residues Trp-72, Arg-74, Arg-191, and 197–199; that span reads RTS. Glu-210 is a Mg(2+) binding site.

Belongs to the UPP synthase family. Homodimer. Mg(2+) serves as cofactor.

In terms of biological role, catalyzes the condensation of isopentenyl diphosphate (IPP) with allylic pyrophosphates generating different type of terpenoids. The sequence is that of Isoprenyl transferase 2 from Corynebacterium glutamicum (strain ATCC 13032 / DSM 20300 / JCM 1318 / BCRC 11384 / CCUG 27702 / LMG 3730 / NBRC 12168 / NCIMB 10025 / NRRL B-2784 / 534).